The sequence spans 330 residues: Beta-ketoacyl-[acyl-carrier-protein] synthase III (330 aa).

Catalysis depends on residues C111 and H249. Positions 250–254 (QANTR) are ACP-binding. N279 is a catalytic residue.

It belongs to the thiolase-like superfamily. FabH family. As to quaternary structure, homodimer.

The protein localises to the cytoplasm. The catalysed reaction is malonyl-[ACP] + acetyl-CoA + H(+) = 3-oxobutanoyl-[ACP] + CO2 + CoA. The protein operates within lipid metabolism; fatty acid biosynthesis. Its function is as follows. Catalyzes the condensation reaction of fatty acid synthesis by the addition to an acyl acceptor of two carbons from malonyl-ACP. Catalyzes the first condensation reaction which initiates fatty acid synthesis and may therefore play a role in governing the total rate of fatty acid production. Possesses both acetoacetyl-ACP synthase and acetyl transacylase activities. Its substrate specificity determines the biosynthesis of branched-chain and/or straight-chain of fatty acids. In Pseudomonas aeruginosa (strain LESB58), this protein is Beta-ketoacyl-[acyl-carrier-protein] synthase III.